The primary structure comprises 345 residues: Selenide, water dikinase (345 aa).

Residue cysteine 16 is part of the active site. ATP is bound by residues lysine 19 and 46 to 48 (TSD). A Mg(2+)-binding site is contributed by aspartate 49. Residues aspartate 66, aspartate 89, and 136–138 (GHT) contribute to the ATP site. Aspartate 89 lines the Mg(2+) pocket. Aspartate 224 serves as a coordination point for Mg(2+).

Belongs to the selenophosphate synthase 1 family. Class I subfamily. In terms of assembly, homodimer. Requires Mg(2+) as cofactor.

It carries out the reaction hydrogenselenide + ATP + H2O = selenophosphate + AMP + phosphate + 2 H(+). In terms of biological role, synthesizes selenophosphate from selenide and ATP. In Clostridium botulinum (strain Alaska E43 / Type E3), this protein is Selenide, water dikinase.